Reading from the N-terminus, the 321-residue chain is Putative ribose-phosphate pyrophosphokinase 2 (321 aa).

Residues aspartate 41–glutamate 43 and arginine 100–glutamine 101 each bind ATP. Histidine 134 contributes to the Mg(2+) binding site. D-ribose 5-phosphate contacts are provided by residues aspartate 223 and asparagine 227 to threonine 231.

The protein belongs to the ribose-phosphate pyrophosphokinase family. Class I subfamily. As to quaternary structure, homohexamer. Mg(2+) serves as cofactor.

It is found in the cytoplasm. It carries out the reaction D-ribose 5-phosphate + ATP = 5-phospho-alpha-D-ribose 1-diphosphate + AMP + H(+). Its pathway is metabolic intermediate biosynthesis; 5-phospho-alpha-D-ribose 1-diphosphate biosynthesis; 5-phospho-alpha-D-ribose 1-diphosphate from D-ribose 5-phosphate (route I): step 1/1. Its function is as follows. Involved in the biosynthesis of the central metabolite phospho-alpha-D-ribosyl-1-pyrophosphate (PRPP) via the transfer of pyrophosphoryl group from ATP to 1-hydroxyl of ribose-5-phosphate (Rib-5-P). The sequence is that of Putative ribose-phosphate pyrophosphokinase 2 from Lactococcus lactis subsp. lactis (strain IL1403) (Streptococcus lactis).